The following is a 219-amino-acid chain: 3-dehydroquinate dehydratase (219 aa).

Residues 28 to 30 (ELR) and arginine 61 each bind 3-dehydroquinate. Histidine 116 serves as the catalytic Proton donor/acceptor. Catalysis depends on lysine 142, which acts as the Schiff-base intermediate with substrate. Residues arginine 180 and glutamine 203 each contribute to the 3-dehydroquinate site.

It belongs to the type-I 3-dehydroquinase family. As to quaternary structure, homodimer.

It carries out the reaction 3-dehydroquinate = 3-dehydroshikimate + H2O. It participates in metabolic intermediate biosynthesis; chorismate biosynthesis; chorismate from D-erythrose 4-phosphate and phosphoenolpyruvate: step 3/7. Its function is as follows. Involved in the third step of the chorismate pathway, which leads to the biosynthesis of aromatic amino acids. Catalyzes the cis-dehydration of 3-dehydroquinate (DHQ) and introduces the first double bond of the aromatic ring to yield 3-dehydroshikimate. The protein is 3-dehydroquinate dehydratase of Aquifex aeolicus (strain VF5).